We begin with the raw amino-acid sequence, 1982 residues long: CASP8-associated protein 2 (1982 aa).

A2 is subject to N-acetylalanine. Residue S20 is modified to Phosphoserine. The span at 159–191 shows a compositional bias: basic and acidic residues; sequence VKTKDLKSRSPHLDDCSKTDHRAKSDVSKDVHH. The disordered stretch occupies residues 159–552; the sequence is VKTKDLKSRS…ESGPNETKNK (394 aa). S194 carries the phosphoserine modification. The segment covering 198–210 has biased composition (basic and acidic residues); that stretch reads LEKEGKPHSDKRS. Over residues 225 to 240 the composition is skewed to polar residues; it reads GVWSRSHYQVGEGSSN. Residues 286-395 show a composition bias toward basic and acidic residues; the sequence is GHPEKYGKGE…ERASLPHSKN (110 aa). Over residues 396–405 the composition is skewed to polar residues; it reads EITFSHNSSK. 3 stretches are compositionally biased toward basic and acidic residues: residues 406-423, 444-455, and 463-524; these read YHLEERRGWEDCKRDKSV, KNIDSKEVDAMH, and KAER…KGEV. At S567 the chain carries Phosphoserine. Positions 569–593 are disordered; sequence AKKQPVSQDNQHKITDIPKSSGVCD. Residues S658, S815, and S875 each carry the phosphoserine modification. Disordered stretches follow at residues 875–1017, 1157–1188, and 1251–1283; these read SPPQ…DKVM, FGRDSDEGKLEKTSKQNAQYSNSQKRSVDNSN, and ERSLEVHCPSTPKSEKNEGSSIEDAQTSQHATL. A compositionally biased stretch (polar residues) spans 894–904; that stretch reads SAHSTSKSQSD. 4 stretches are compositionally biased toward basic and acidic residues: residues 905–924, 936–965, 999–1016, and 1157–1170; these read LNKENQKPIYKSDKCTEADT, GEIRSDSETSKPQESFEKNSKRRVSADVRK, KRPDKSSRSSKTEKKDKV, and FGRDSDEGKLEKTS. A Phosphoserine modification is found at S940. The residue at position 1161 (S1161) is a Phosphoserine. Composition is skewed to polar residues over residues 1171–1181 and 1269–1281; these read KQNAQYSNSQK and GSSIEDAQTSQHA. N6-acetyllysine is present on K1343. Positions 1683-1687 match the SUMO interaction motif 1 (SIM); mediates the binding to polysumoylated substrates motif; the sequence is YVDLT. Residues 1709 to 1982 form an NCOA2-binding region; sequence DQLGCSGGNL…MKLFEKSKCR (274 aa). The SUMO interaction motif 2 (SIM); mediates the binding to polysumoylated substrates signature appears at 1737-1741; that stretch reads FIDLT. The SUMO interaction motif 3 (SIM); mediates the binding to polysumoylated substrates motif lies at 1794–1798; that stretch reads YIDLT. The interval 1803–1909 is disordered; that stretch reads SSCEVKKDEL…IKDSSAALAT (107 aa). Basic and acidic residues predominate over residues 1851–1865; that stretch reads KETDLTNKEKTKKPT.

Self-associates. Component of the death-inducing signaling complex (DISC) with CASP8, FADD and FAS. Interacts with NCOA2 and NCOA3. Interacts with SRRT. Interacts with TRAF2. Interacts with NPAT. Interacts (via SIM domains) with SUMO1 and SUMO2. Interacts with SP100; may negatively regulate CASP8AP2 export from the nucleus to the cytoplasm.

The protein localises to the cytoplasm. It localises to the nucleus. The protein resides in the PML body. Its subcellular location is the mitochondrion. Its function is as follows. Participates in TNF-alpha-induced blockade of glucocorticoid receptor (GR) transactivation at the nuclear receptor coactivator level, upstream and independently of NF-kappa-B. Suppresses both NCOA2- and NCOA3-induced enhancement of GR transactivation. Involved in TNF-alpha-induced activation of NF-kappa-B via a TRAF2-dependent pathway. Acts as a downstream mediator for CASP8-induced activation of NF-kappa-B. Required for the activation of CASP8 in FAS-mediated apoptosis. Required for histone gene transcription and progression through S phase. The sequence is that of CASP8-associated protein 2 from Homo sapiens (Human).